A 103-amino-acid chain; its full sequence is Cyanovirin-N homolog (103 aa).

Belongs to the cyanovirin-N family.

Mannose-binding lectin. The sequence is that of Cyanovirin-N homolog from Tuber borchii (White truffle).